The primary structure comprises 327 residues: Putative HTH-type transcriptional regulatory protein Mbar_A2318 (327 aa).

An HTH cro/C1-type domain is found at 132–190 (LKKARMGQSMSLGTLASMVGVSRRTISKYEEEGMDASIDVVLQLEDIFGVELAKPINIL). The segment at residues 143–162 (LGTLASMVGVSRRTISKYEE) is a DNA-binding region (H-T-H motif).

In Methanosarcina barkeri (strain Fusaro / DSM 804), this protein is Putative HTH-type transcriptional regulatory protein Mbar_A2318.